A 108-amino-acid polypeptide reads, in one-letter code: Nucleoid-associated protein BPP1222 (108 aa).

Residues 86–108 form a disordered region; sequence TSQEKMASVTAGMPLPPGMKLPF. The span at 99 to 108 shows a compositional bias: pro residues; that stretch reads PLPPGMKLPF.

It belongs to the YbaB/EbfC family. In terms of assembly, homodimer.

It is found in the cytoplasm. Its subcellular location is the nucleoid. In terms of biological role, binds to DNA and alters its conformation. May be involved in regulation of gene expression, nucleoid organization and DNA protection. The polypeptide is Nucleoid-associated protein BPP1222 (Bordetella parapertussis (strain 12822 / ATCC BAA-587 / NCTC 13253)).